Reading from the N-terminus, the 982-residue chain is Mineralocorticoid receptor (982 aa).

The interval 1 to 601 is modulating; sequence METKGYHSLP…STGSSRPSKI (601 aa). Residues 230–242 show a composition bias toward polar residues; sequence QGTPLTCSPNVEN. 2 disordered regions span residues 230–328 and 345–375; these read QGTP…AAST and SGTSAGSSTSRDVVPSPDTQEKGAQEVPFPK. Residues Ser249, Ser258, Ser282, Ser286, and Ser298 each carry the phosphoserine modification. Residues 258 to 299 are compositionally biased toward low complexity; that stretch reads SPLSSPLSSMKSSISSPPSHCSVKSPVSSPNNVTPRSSVSSP. Residues 300-328 are compositionally biased toward polar residues; it reads ANINNSRCSVSSPSNTNNRSTLSSPAAST. Positions 345 to 354 are enriched in low complexity; it reads SGTSAGSSTS. Residues Cys602, Cys605, Cys619, Cys622, Cys638, Cys644, Cys654, and Cys657 each contribute to the Zn(2+) site. 2 NR C4-type zinc fingers span residues 602 to 622 and 638 to 662; these read CLVCGDEASGCHYGVVTCGSC and CAGRNDCIIDKIRRKNCPACRLQKC. A DNA-binding region (nuclear receptor) is located at residues 602–667; sequence CLVCGDEASG…RLQKCLQAGM (66 aa). The hinge stretch occupies residues 668-723; the sequence is NLGARRSKKLGKLKGIHEEQPQQQPPPPPPPPQSPEEGTTYIAPAKEPSVNTALVP. A disordered region spans residues 682–708; the sequence is GIHEEQPQQQPPPPPPPPQSPEEGTTY. The span at 690-701 shows a compositional bias: pro residues; it reads QQPPPPPPPPQS. Residues 724 to 962 enclose the NR LBD domain; the sequence is QLSAISRALT…EFPAMLVEII (239 aa). The 21-hydroxyprogesterone site is built by Asn768 and Gln774. Asn768 and Gln774 together coordinate aldosterone. Positions 768 and 774 each coordinate progesterone. Residues 780–783 are important for coactivator binding; sequence KWAK. 2 residues coordinate 21-hydroxyprogesterone: Arg815 and Thr943. Aldosterone is bound by residues Arg815 and Thr943. Arg815 and Thr943 together coordinate progesterone.

Belongs to the nuclear hormone receptor family. NR3 subfamily. In terms of processing, phosphorylated. As to expression, expressed in hippocampus, being restricted to the more superficial cortical layers.

The protein resides in the cytoplasm. Its subcellular location is the nucleus. Receptor for both mineralocorticoids (MC) such as aldosterone and glucocorticoids (GC) such as corticosterone or cortisol. Binds to mineralocorticoid response elements (MRE) and transactivates target genes. The effect of MC is to increase ion and water transport and thus raise extracellular fluid volume and blood pressure and lower potassium levels. The sequence is that of Mineralocorticoid receptor (NR3C2) from Saimiri sciureus (Common squirrel monkey).